A 475-amino-acid polypeptide reads, in one-letter code: Fez family zinc finger protein 1 (475 aa).

The Engrailed homology 1 repressor signature appears at 28–43; sequence PLAFSIERIMARTPEP. 6 C2H2-type zinc fingers span residues 260–282, 288–310, 316–338, 344–366, 372–394, and 400–423; these read FTCEVCGKVFNAHYNLTRHMPVH, FVCKVCGKGFRQASTLCRHKIIH, HKCNQCGKAFNRSSTLNTHTRIH, FVCEFCGKGFHQKGNYKNHKLTH, FKCNICNKAFHQVYNLTFHMHTH, and FTCPTCGKGFCRNFDLKKHVRKLH. A disordered region spans residues 428 to 475; the sequence is GLARTPAGEPGTEPPPPLPQQPPMTLPPLQPPLPTPGPLQPGLHQGHQ. A compositionally biased stretch (pro residues) spans 439 to 466; that stretch reads TEPPPPLPQQPPMTLPPLQPPLPTPGPL.

Belongs to the krueppel C2H2-type zinc-finger protein family. As to expression, expressed in brain. Little or no expression in other tissues. Overexpressed specifically in gastric cancers. A 2- to 20-fold increase is found in over 50% of gastric cancer tissues.

It is found in the nucleus. Functionally, transcription repressor. Involved in the axonal projection and proper termination of olfactory sensory neurons (OSN). Plays a role in rostro-caudal patterning of the diencephalon and in prethalamic formation. Expression is required in OSN to cell-autonomously regulate OSN axon projections. Regulates non-cell-autonomously the layer formation of the olfactory bulb development and the interneurons. May be required for correct rostral migration of the interneuron progenitors. In Homo sapiens (Human), this protein is Fez family zinc finger protein 1 (FEZF1).